Consider the following 263-residue polypeptide: Indolethylamine N-methyltransferase (263 aa).

Lys13 carries the post-translational modification N6-succinyllysine. S-adenosyl-L-methionine-binding positions include Tyr20, Tyr25, Gly63 to Ser64, Tyr69, Asp85, and Asn90. Lys96 carries the N6-succinyllysine modification. Residues Asp142–Val143 and Leu163 contribute to the S-adenosyl-L-methionine site.

The protein belongs to the class I-like SAM-binding methyltransferase superfamily. NNMT/PNMT/TEMT family. In terms of assembly, monomer.

It localises to the cytoplasm. It carries out the reaction a tertiary amine + S-adenosyl-L-methionine = a methylated tertiary amine + S-adenosyl-L-homocysteine + H(+). The catalysed reaction is a secondary amine + S-adenosyl-L-methionine = a methylated secondary amine + S-adenosyl-L-homocysteine + H(+). The enzyme catalyses a primary amine + S-adenosyl-L-methionine = a methylated primary amine + S-adenosyl-L-homocysteine + H(+). It catalyses the reaction dimethyl sulfide + S-adenosyl-L-methionine = trimethylsulfonium + S-adenosyl-L-homocysteine. In terms of biological role, catalyzes the N-methylation of tryptamine and structurally related compounds. Functions as a thioether S-methyltransferase and is active with a variety of thioethers and the corresponding selenium and tellurium compounds, including 3-methylthiopropionaldehyde, dimethyl selenide, dimethyl telluride, 2-methylthioethylamine, 2-methylthioethanol, methyl-n-propyl sulfide and diethyl sulfide. Plays an important role in the detoxification of selenium compounds. This Pongo abelii (Sumatran orangutan) protein is Indolethylamine N-methyltransferase (INMT).